A 135-amino-acid chain; its full sequence is CDGSH iron-sulfur domain-containing protein 2A (135 aa).

Topologically, residues 1–37 are lumenal; the sequence is MVLESIARVIKVQLPAYLKRLPIPDSIAGFIRLTVSE. Residues 38 to 60 traverse the membrane as a helical segment; it reads WLRLLPFLGVLALLGYLAIRPFL. The Cytoplasmic segment spans residues 61 to 135; it reads LKKKQQKDSL…GPLILKKKEV (75 aa). 4 residues coordinate [2Fe-2S] cluster: Cys-99, Cys-101, Cys-110, and His-114.

This sequence belongs to the CISD protein family. CISD2 subfamily. As to quaternary structure, homodimer. It depends on [2Fe-2S] cluster as a cofactor.

Its subcellular location is the endoplasmic reticulum membrane. The protein localises to the mitochondrion outer membrane. Regulator of autophagy that contributes to antagonize becn1-mediated cellular autophagy at the endoplasmic reticulum. Participates in the interaction of bcl2 with becn1 and is required for bcl2-mediated depression of endoplasmic reticulum Ca(2+) stores during autophagy. In Xenopus laevis (African clawed frog), this protein is CDGSH iron-sulfur domain-containing protein 2A (cisd2-a).